The primary structure comprises 198 residues: Large ribosomal subunit protein bL12m (198 aa).

The N-terminal 36 residues, 1–36 (MLPSATSLLRGPCLGLRAAALRLVRQQVPHVCAVRL), are a transit peptide targeting the mitochondrion. Residues 106 to 115 (GAAPAPTAPE) are compositionally biased toward low complexity. Residues 106-126 (GAAPAPTAPEAAEEDVPKQKE) are disordered. K125, K138, K142, and K144 each carry N6-acetyllysine. K150 is subject to N6-acetyllysine; alternate. An N6-succinyllysine; alternate modification is found at K150. K150 participates in a covalent cross-link: Glycyl lysine isopeptide (Lys-Gly) (interchain with G-Cter in ubiquitin). The residue at position 162 (K162) is an N6-succinyllysine. N6-acetyllysine is present on residues K163 and K173. At K178 the chain carries N6-acetyllysine; alternate. The residue at position 178 (K178) is an N6-succinyllysine; alternate. K185 carries the N6-acetyllysine modification.

This sequence belongs to the bacterial ribosomal protein bL12 family. In terms of assembly, component of the mitochondrial ribosome large subunit (39S) which comprises a 16S rRNA and about 50 distinct proteins. Interacts with NOA1. In terms of processing, two mature forms are produced by differential two-step proteolytic cleavage. Cleaved by the mitochondrial processing protease to produce the long mature form and subsequently by the mitochondrial intermediate protease to produce the short mature form. In the presence of CUL3, undergoes 'Lys-63'-linked ubiquitination at Lys-150 which results in proteasomal degradation.

The protein localises to the mitochondrion matrix. Its function is as follows. As a component of the mitochondrial large ribosomal subunit, plays a role in mitochondrial translation. When present in mitochondria as a free protein not associated with the ribosome, associates with mitochondrial RNA polymerase POLRMT to activate transcription. Required for POLRMT stability. The protein is Large ribosomal subunit protein bL12m (MRPL12) of Bos taurus (Bovine).